The sequence spans 287 residues: 4-hydroxybenzoate octaprenyltransferase (287 aa).

The next 9 helical transmembrane spans lie at 21-41 (VGIFLLLWPTLWAVWIAAKGA), 44-64 (FKIAVIFIAGSVVMRAAGCIV), 91-111 (VTEAMLLFAVLSLIAFTLVLL), 112-132 (LNRLTVELAVIGILLALVYPF), 139-159 (LPQLWLGIAFSWSIPMAFAAT), 160-180 (VGHVPAVAWLLFFAAVLWPIV), 211-231 (LMIGLLQGSVLLTFGLLGWYL), 235-255 (YWFYLGLLVALGLMCYQQFLI), and 263-283 (CFAAFRNNNWVGFFIFLGILL).

Belongs to the UbiA prenyltransferase family. Mg(2+) serves as cofactor.

It localises to the cell inner membrane. The catalysed reaction is all-trans-octaprenyl diphosphate + 4-hydroxybenzoate = 4-hydroxy-3-(all-trans-octaprenyl)benzoate + diphosphate. It participates in cofactor biosynthesis; ubiquinone biosynthesis. Catalyzes the prenylation of para-hydroxybenzoate (PHB) with an all-trans polyprenyl group. Mediates the second step in the final reaction sequence of ubiquinone-8 (UQ-8) biosynthesis, which is the condensation of the polyisoprenoid side chain with PHB, generating the first membrane-bound Q intermediate 3-octaprenyl-4-hydroxybenzoate. This Coxiella burnetii (strain CbuK_Q154) (Coxiella burnetii (strain Q154)) protein is 4-hydroxybenzoate octaprenyltransferase.